The chain runs to 1125 residues: Exportin-6 (1125 aa).

The residue at position 2 (Ala2) is an N-acetylalanine. The 67-residue stretch at 31–97 (IEELLNNFAQ…RSCLPKLLLA (67 aa)) folds into the Importin N-terminal domain. Ser199 carries the phosphoserine modification. Phosphothreonine is present on residues Thr201 and Thr204. Phosphoserine is present on residues Ser208 and Ser224.

Belongs to the exportin family. In terms of assembly, found in a complex with XPO6, Ran, ACTB and PFN1. Interacts with ACTB. Interacts with ACTB in a RanGTP-dependent manner.

It is found in the nucleus. Its subcellular location is the cytoplasm. In terms of biological role, mediates the nuclear export of actin and profilin-actin complexes in somatic cells. The sequence is that of Exportin-6 (XPO6) from Homo sapiens (Human).